A 116-amino-acid chain; its full sequence is NADH-ubiquinone oxidoreductase chain 3 (116 aa).

A run of 3 helical transmembrane segments spans residues 3–23 (LITTIITITITLSAVLATISF), 56–76 (FFLIAILFLLFDLEIALLLPL), and 87–107 (LTLIWSTAVLALLTLGLIYEW).

This sequence belongs to the complex I subunit 3 family.

It is found in the mitochondrion membrane. It catalyses the reaction a ubiquinone + NADH + 5 H(+)(in) = a ubiquinol + NAD(+) + 4 H(+)(out). Core subunit of the mitochondrial membrane respiratory chain NADH dehydrogenase (Complex I) that is believed to belong to the minimal assembly required for catalysis. Complex I functions in the transfer of electrons from NADH to the respiratory chain. The immediate electron acceptor for the enzyme is believed to be ubiquinone. This Oncorhynchus mykiss (Rainbow trout) protein is NADH-ubiquinone oxidoreductase chain 3 (MT-ND3).